Consider the following 156-residue polypeptide: Ribonuclease H (156 aa).

The region spanning 3–144 is the RNase H type-1 domain; that stretch reads ELKLIHIFTD…CDVLARTAAE (142 aa). Mg(2+) contacts are provided by Asp-12, Glu-50, Asp-72, and Asp-136.

Belongs to the RNase H family. Monomer. It depends on Mg(2+) as a cofactor.

The protein resides in the cytoplasm. It carries out the reaction Endonucleolytic cleavage to 5'-phosphomonoester.. In terms of biological role, endonuclease that specifically degrades the RNA of RNA-DNA hybrids. This is Ribonuclease H from Shewanella baltica (strain OS223).